The following is a 331-amino-acid chain: 5'-AMP-activated protein kinase subunit gamma-1 (331 aa).

The span at 1-12 (METVISSDSSPA) shows a compositional bias: polar residues. A disordered region spans residues 1–26 (METVISSDSSPAVENEHPQETPESNN). CBS domains lie at 43–103 (PTSS…KSAL), 125–187 (SFKP…PKPE), and 198–260 (IGTY…NLDV). Residues Arg70, 85 to 90 (MLTITD), Val130, 151 to 152 (HR), and Lys170 each bind ADP. Residues Arg70, 85 to 90 (MLTITD), Val130, His151, 151 to 152 (HR), Lys170, Thr200, Ala205, 226 to 227 (SA), and 242 to 245 (SKFD) each bind AMP. ATP contacts are provided by residues Arg70, 85–90 (MLTITD), Val130, 151–152 (HR), Arg152, and Lys170. The short motif at 138–159 (LFDAVSSLIRNKIHRLPVIDPE) is the AMPK pseudosubstrate element. An ADP-binding site is contributed by 242 to 245 (SKFD). 242–245 (SKFD) serves as a coordination point for ATP. Ser261 is subject to Phosphoserine; by ULK1. Residue Thr263 is modified to Phosphothreonine; by ULK1. Position 269 (Arg269) interacts with ADP. Arg269 contributes to the AMP binding site. Position 269 (Arg269) interacts with ATP. Ser270 is modified (phosphoserine; by ULK1). The 58-residue stretch at 272 to 329 (YFEGVLKCYLHETLETIINRLVEAEVHRLVVVDENDVVKGIVSLSDILQALVLTGGEK) folds into the CBS 4 domain. ADP-binding positions include Leu277 and 298 to 299 (HR). Residues Leu277, His298, 298–299 (HR), and 314–317 (SLSD) contribute to the AMP site. ATP-binding positions include Leu277 and 298–299 (HR).

Belongs to the 5'-AMP-activated protein kinase gamma subunit family. As to quaternary structure, AMPK is a heterotrimer of an alpha catalytic subunit (PRKAA1 or PRKAA2), a beta (PRKAB1 or PRKAB2) and a gamma non-catalytic subunits (PRKAG1, PRKAG2 or PRKAG3). Interacts with FNIP1 and FNIP2. In terms of processing, phosphorylated by ULK1 and ULK2; leading to negatively regulate AMPK activity and suggesting the existence of a regulatory feedback loop between ULK1, ULK2 and AMPK. Post-translationally, glycosylated; O-GlcNAcylated by OGT, promoting the AMP-activated protein kinase (AMPK) activity.

Functionally, AMP/ATP-binding subunit of AMP-activated protein kinase (AMPK), an energy sensor protein kinase that plays a key role in regulating cellular energy metabolism. In response to reduction of intracellular ATP levels, AMPK activates energy-producing pathways and inhibits energy-consuming processes: inhibits protein, carbohydrate and lipid biosynthesis, as well as cell growth and proliferation. AMPK acts via direct phosphorylation of metabolic enzymes, and by longer-term effects via phosphorylation of transcription regulators. Also acts as a regulator of cellular polarity by remodeling the actin cytoskeleton; probably by indirectly activating myosin. Gamma non-catalytic subunit mediates binding to AMP, ADP and ATP, leading to activate or inhibit AMPK: AMP-binding results in allosteric activation of alpha catalytic subunit (PRKAA1 or PRKAA2) both by inducing phosphorylation and preventing dephosphorylation of catalytic subunits. ADP also stimulates phosphorylation, without stimulating already phosphorylated catalytic subunit. ATP promotes dephosphorylation of catalytic subunit, rendering the AMPK enzyme inactive. In Homo sapiens (Human), this protein is 5'-AMP-activated protein kinase subunit gamma-1 (PRKAG1).